Reading from the N-terminus, the 170-residue chain is uncharacterized protein (170 aa).

Residues 1 to 26 (MLKKKWMVGLLAGCLAAGGFSYNAFA) form the signal peptide.

This is an uncharacterized protein from Bacillus subtilis (strain 168).